Consider the following 798-residue polypeptide: RNA cytosine-C(5)-methyltransferase NSUN2 (798 aa).

Basic residues predominate over residues 1–13 (MGRRNRRNRQRHQ). The disordered stretch occupies residues 1 to 30 (MGRRNRRNRQRHQRSTEQRSPAEEEQRRKA). Basic and acidic residues predominate over residues 14 to 30 (RSTEQRSPAEEEQRRKA). S-adenosyl-L-methionine-binding positions include 186–192 (CAAPGSK), Asp217, Asp244, and Asp270. The active-site Nucleophile is Cys323. 2 disordered regions span residues 476-499 (DEPA…SSKT) and 723-798 (KACD…ESVD). The segment covering 723–747 (KACDEEHIDEKMDIDGAKEESKELS) has biased composition (basic and acidic residues). Over residues 751–762 (SGDDEDPKEEDV) the composition is skewed to acidic residues. Over residues 763–772 (IDRGVLEHVA) the composition is skewed to basic and acidic residues.

Belongs to the class I-like SAM-binding methyltransferase superfamily. RsmB/NOP family. TRM4 subfamily.

It is found in the nucleus. The protein localises to the nucleolus. Its subcellular location is the cytoplasm. It localises to the mitochondrion. The protein resides in the cytoskeleton. It is found in the spindle. The protein localises to the secreted. Its subcellular location is the extracellular exosome. The catalysed reaction is cytidine(48) in tRNA + S-adenosyl-L-methionine = 5-methylcytidine(48) in tRNA + S-adenosyl-L-homocysteine + H(+). It catalyses the reaction cytidine(49) in tRNA + S-adenosyl-L-methionine = 5-methylcytidine(49) in tRNA + S-adenosyl-L-homocysteine + H(+). The enzyme catalyses cytidine(50) in tRNA + S-adenosyl-L-methionine = 5-methylcytidine(50) in tRNA + S-adenosyl-L-homocysteine + H(+). It carries out the reaction cytidine(34) in tRNA precursor + S-adenosyl-L-methionine = 5-methylcytidine(34) in tRNA precursor + S-adenosyl-L-homocysteine + H(+). The catalysed reaction is a cytidine in mRNA + S-adenosyl-L-methionine = a 5-methylcytidine in mRNA + S-adenosyl-L-homocysteine + H(+). In terms of biological role, RNA cytosine C(5)-methyltransferase that methylates cytosine to 5-methylcytosine (m5C) in various RNAs, such as tRNAs, mRNAs and some long non-coding RNAs (lncRNAs). Involved in various processes, such as epidermal stem cell differentiation, testis differentiation and maternal to zygotic transition during early development: acts by increasing protein synthesis; cytosine C(5)-methylation promoting tRNA stability and preventing mRNA decay. Methylates cytosine to 5-methylcytosine (m5C) at positions 34 and 48 of intron-containing tRNA(Leu)(CAA) precursors, and at positions 48, 49 and 50 of tRNA(Gly)(GCC) precursors. tRNA methylation is required generation of RNA fragments derived from tRNAs (tRFs). Also mediates C(5)-methylation of mitochondrial tRNAs. Catalyzes cytosine C(5)-methylation of mRNAs, leading to stabilize them and prevent mRNA decay. Cytosine C(5)-methylation of mRNAs also regulates mRNA export. Also mediates cytosine C(5)-methylation of non-coding RNAs, such as vault RNAs (vtRNAs), promoting their processing into regulatory small RNAs. Required for proper spindle assembly and chromosome segregation, independently of its methyltransferase activity. This chain is RNA cytosine-C(5)-methyltransferase NSUN2, found in Xenopus tropicalis (Western clawed frog).